The chain runs to 219 residues: Small ribosomal subunit protein uS3 (219 aa).

One can recognise a KH type-2 domain in the interval 38–106 (VRKFVKTKLQ…QVAVNIVEVK (69 aa)).

The protein belongs to the universal ribosomal protein uS3 family. Part of the 30S ribosomal subunit. Forms a tight complex with proteins S10 and S14.

In terms of biological role, binds the lower part of the 30S subunit head. Binds mRNA in the 70S ribosome, positioning it for translation. The sequence is that of Small ribosomal subunit protein uS3 from Desulfitobacterium hafniense (strain DSM 10664 / DCB-2).